The sequence spans 685 residues: Mannan-binding lectin serine protease 2 (685 aa).

The first 19 residues, Met-1 to Gly-19, serve as a signal peptide directing secretion. In terms of domain architecture, CUB 1 spans Ser-20–Glu-137. Positions 67 and 75 each coordinate Ca(2+). Cys-72 and Cys-90 form a disulfide bridge. Asn-103 is a glycosylation site (N-linked (GlcNAc...) asparagine). Ca(2+) contacts are provided by Asp-120, Ser-122, Asn-123, Asp-138, and Val-139. The region spanning Asp-138–Ser-181 is the EGF-like; calcium-binding domain. Intrachain disulfides connect Cys-152–Cys-165, Cys-167–Cys-180, Cys-184–Cys-211, and Cys-241–Cys-259. Asn-158 is modified ((3R)-3-hydroxyasparagine). Ca(2+) is bound by residues Tyr-159 and Gly-162. The CUB 2 domain maps to Cys-184–Thr-296. N-linked (GlcNAc...) asparagine glycosylation occurs at Asn-285. Sushi domains lie at Gln-298–Ile-363 and Ile-364–Pro-431. Disulfide bonds link Cys-300–Cys-348, Cys-328–Cys-361, Cys-366–Cys-411, Cys-396–Cys-429, Cys-433–Cys-551, Cys-597–Cys-617, and Cys-628–Cys-659. Residues Ile-444–Asn-683 form the Peptidase S1 domain. Active-site charge relay system residues include His-482 and Asp-531. The active-site Charge relay system is Ser-632. N-linked (GlcNAc...) asparagine glycosylation is present at Asn-641.

The protein belongs to the peptidase S1 family. Homodimer; disulfide-linked. Binds MBL2. Isoform 2 binds to MASP1. Binds SERPING1. N-glycosylated. In terms of processing, the iron and 2-oxoglutarate dependent 3-hydroxylation of aspartate and asparagine is (R) stereospecific within EGF domains. In terms of tissue distribution, highly expressed in liver. Secreted in plasma.

The protein resides in the secreted. The catalysed reaction is Selective cleavage after Arg-223 in complement component C2 (-Ser-Leu-Gly-Arg-|-Lys-Ile-Gln-Ile) and after Arg-76 in complement component C4 (-Gly-Leu-Gln-Arg-|-Ala-Leu-Glu-Ile).. Its function is as follows. Serum protease that plays an important role in the activation of the complement system via mannose-binding lectin. After activation by auto-catalytic cleavage it cleaves C2 and C4, leading to their activation and to the formation of C3 convertase. The chain is Mannan-binding lectin serine protease 2 (Masp2) from Rattus norvegicus (Rat).